A 44-amino-acid chain; its full sequence is Capsid protein G8P (44 aa).

Topologically, residues 1-18 (MQSVITDVTGQLTAVQAD) are periplasmic. A helical transmembrane segment spans residues 19–39 (ITTIGGAIIVLAAVVLGIRWI). Topologically, residues 40–44 (KAQFF) are cytoplasmic.

It belongs to the inovirus capsid protein family. In terms of assembly, homomultimerizes. There are several thousand copies of this protein in the phage capsid.

Its subcellular location is the virion. The protein resides in the host cell inner membrane. Self assembles to form a helical capsid wrapping up the viral genomic DNA. The capsid displays a filamentous structure with a length of 760-1950 nm and a width of 6-8 nm. The virion assembly and budding take place at the host inner membrane. This chain is Capsid protein G8P (VIII), found in Pseudomonas aeruginosa (Bacteriophage Pf3).